The sequence spans 456 residues: MFS-type transporter SLC18B1 (456 aa).

Residue Met1 is modified to N-acetylmethionine. The segment at 1 to 24 (MEALGDLEGPRAPGGDDPAGSAGE) is disordered. The Cytoplasmic portion of the chain corresponds to 1 to 33 (MEALGDLEGPRAPGGDDPAGSAGETPGWLSREQ). Over residues 10 to 23 (PRAPGGDDPAGSAG) the composition is skewed to low complexity. The residue at position 21 (Ser21) is a Phosphoserine. A helical transmembrane segment spans residues 34 to 54 (VFVLISAASVNLGSMMCYSIL). The Extracellular segment spans residues 55-70 (GPFFPKEAEKKGASNT). The chain crosses the membrane as a helical span at residues 71–91 (IIGMIFGCFALFELLASLVFG). Over 92–100 (NYLVHIGAK) the chain is Cytoplasmic. The helical transmembrane segment at 101–121 (FMFVAGMFVSGGVTILFGVLD) threads the bilayer. The Extracellular portion of the chain corresponds to 122–127 (RVPDGP). A helical transmembrane segment spans residues 128–148 (VFIAMCFLVRVMDAVSFAAAM). Topologically, residues 149-161 (TASSSILAKAFPN) are cytoplasmic. A helical transmembrane segment spans residues 162 to 184 (NVATVLGSLETFSGLGLILGPPV). The Extracellular portion of the chain corresponds to 185–195 (GGFLYQSFGYE). The helical transmembrane segment at 196–216 (VPFIVLGCVVLLMVPLNMYIL) threads the bilayer. Residues 217-230 (PNYESDPGEHSFWK) are Cytoplasmic-facing. The helical transmembrane segment at 231–251 (LIALPKVGLIAFVINSLSSCF) threads the bilayer. The Extracellular segment spans residues 252 to 272 (GFLDPTLSLFVLEKFNLPAGY). Residues 273 to 293 (VGLVFLGMALSYAISSPLFGL) traverse the membrane as a helical segment. Topologically, residues 294 to 304 (LSDKRPPLRKW) are cytoplasmic. The chain crosses the membrane as a helical span at residues 305 to 325 (LLVFGNLITAGCYMLLGPVPI). The Extracellular segment spans residues 326–331 (LHIKSQ). The helical transmembrane segment at 332-352 (LWLLVLILVVSGLSAGMSIIP) threads the bilayer. The Cytoplasmic portion of the chain corresponds to 353 to 377 (TFPEILSCAHENGFEEGLSTLGLVS). The helical transmembrane segment at 378 to 398 (GLFSAMWSIGAFMGPTLGGFL) threads the bilayer. Over 399-407 (YEKIGFEWA) the chain is Extracellular. A helical membrane pass occupies residues 408–428 (AAIQGLWALISGLAMGLFYLL). At 429–456 (EYSRRKRSKSQNILSTEEERTTLLPNET) the chain is on the cytoplasmic side. Ser438 carries the post-translational modification Phosphoserine.

The protein belongs to the major facilitator superfamily. As to expression, expressed in various tissues including lung, placenta, adrenal gland, liver, testis, and brain.

Its subcellular location is the cytoplasmic vesicle. It is found in the secretory vesicle membrane. The protein localises to the secretory vesicle. The protein resides in the synaptic vesicle membrane. It carries out the reaction spermine(in) + n H(+)(out) = spermine(out) + n H(+)(in). The enzyme catalyses spermidine(in) + n H(+)(out) = spermidine(out) + n H(+)(in). The catalysed reaction is serotonin(in) + n H(+)(out) = serotonin(out) + n H(+)(in). Functionally, proton-coupled polyamine antiporter involved in the translocation of polyamines from cytosol into secretory vesicles prior to their release via exocytosis. Uses the electrochemical proton gradient generated by a V-type proton-pumping ATPase to couple the efflux of protons with the uptake of a polyamine molecule. Facilitates vesicular storage of spermine and spermidine in astrocytes with an impact on glutamatergic neuronal transmission and memory formation. Upon antigen stimulation, regulates polyamine accumulation and release in mast cell secretory granules, which in turn potentiates mast cell degranulation and histamine secretion. This is MFS-type transporter SLC18B1 from Homo sapiens (Human).